A 447-amino-acid polypeptide reads, in one-letter code: Omega-3 fatty acid desaturase, chloroplastic (447 aa).

The Histidine box-1 signature appears at 167–171 (HDCGH). A Histidine box-2 motif is present at residues 203 to 207 (HRTHH). Positions 370–374 (HVIHH) match the Histidine box-3 motif.

This sequence belongs to the fatty acid desaturase type 1 family.

The protein resides in the plastid. The protein localises to the chloroplast membrane. It functions in the pathway lipid metabolism; polyunsaturated fatty acid biosynthesis. Chloroplast omega-3 fatty acid desaturase introduces the third double bond in the biosynthesis of 16:3 and 18:3 fatty acids, important constituents of plant membranes. It is thought to use ferredoxin as an electron donor and to act on fatty acids esterified to galactolipids, sulfolipids and phosphatidylglycerol. This chain is Omega-3 fatty acid desaturase, chloroplastic (FAD7), found in Sesamum indicum (Oriental sesame).